A 156-amino-acid chain; its full sequence is MIMMGKLKYKIQVNPEKTARAMGRNIPISRKHAREICKSINGMKLDEAIKFLEDVIAMRRPVLFRRHCKKVGHRKGKLGWPAGRYPVKAAKAILKILQHAKANAEYKGLNTEKLRIKHISTNKGITIKRYMPRAFGRATPKFQETVHIQVILEEYH.

This sequence belongs to the universal ribosomal protein uL22 family. In terms of assembly, part of the 50S ribosomal subunit.

Its function is as follows. This protein binds specifically to 23S rRNA. It makes multiple contacts with different domains of the 23S rRNA in the assembled 50S subunit and ribosome. The globular domain of the protein is located near the polypeptide exit tunnel on the outside of the subunit, while an extended beta-hairpin is found that lines the wall of the exit tunnel in the center of the 70S ribosome. The protein is Large ribosomal subunit protein uL22 of Methanocaldococcus jannaschii (strain ATCC 43067 / DSM 2661 / JAL-1 / JCM 10045 / NBRC 100440) (Methanococcus jannaschii).